A 145-amino-acid polypeptide reads, in one-letter code: Putative pre-16S rRNA nuclease (145 aa).

It belongs to the YqgF nuclease family.

The protein resides in the cytoplasm. Its function is as follows. Could be a nuclease involved in processing of the 5'-end of pre-16S rRNA. The sequence is that of Putative pre-16S rRNA nuclease from Levilactobacillus brevis (strain ATCC 367 / BCRC 12310 / CIP 105137 / JCM 1170 / LMG 11437 / NCIMB 947 / NCTC 947) (Lactobacillus brevis).